Consider the following 436-residue polypeptide: Transcription factor MYB124 (436 aa).

Over residues 1–11 (MEDTKKKKKKN) the composition is skewed to basic residues. The tract at residues 1-23 (MEDTKKKKKKNINNNQDSKKKER) is disordered. Positions 8–15 (KKKNINNN) match the Nuclear localization signal 1 motif. HTH myb-type domains lie at 20–71 (KKER…YTYL) and 72–126 (NSDF…KKRA). 2 DNA-binding regions (H-T-H motif) span residues 48-71 (WAII…YTYL) and 99-122 (WTEI…TTLC). A Nuclear localization signal 2 motif is present at residues 151-158 (PRKSENET). The tract at residues 309–328 (SWRQPDLHDSPASSEYSSGS) is disordered. The span at 319-328 (PASSEYSSGS) shows a compositional bias: polar residues.

In terms of assembly, interacts with RBR1. As to expression, expressed in all shoot organs with higher levels in leaves, stems, flowers, siliques and floral buds. Also detected in roots tips.

Its subcellular location is the nucleus. Transcription factor that binds to DNA in promoters cis-regulatory element 5'-GGCGCGC-3' of cell cycle genes, including cyclins, cyclin-dependent kinases (CDKs), and components of the pre-replication complex. Binds to DNA in promoters cis-regulatory element 5'-AGCCG-3' of auxin regulated genes (e.g. PIN3 and PIN7). Together with FAMA and MYB88, ensures that stomata contain just two guard cells (GCs) by enforcing a single symmetric precursor cell division before stomatal maturity. Represses the expression of the mitosis-inducing factors CDKB1-1 and CDKA-1, specifically required for the last guard mother cells (GMC) symmetric divisions in the stomatal pathway. Represses CYCA2-3 in newly formed guard cells. Together with MYB88, regulates stomata spacing by restricting divisions late in the stomatal cell lineage thus limiting the number of GMC divisions. In collaboration with CDKB1-1 and CDKB1-2, restrict the G1/S transition and chloroplast and nuclear number during stomatal formation, and normally maintain fate and developmental progression throughout the stomatal cell lineage. Also involved in the shape regulation of pavement cells. Involved in sensing and/or transducing abiotic stress (e.g. drought and salt), probably via the positive regulation of NAC019. Regulates female reproduction being required for entry into megasporogenesis, probably via the regulation of cell cycle genes. Promotes histone H3K27me3 marks and represses stem cell gene expression. Required for lateral roots (LRs) initiation via the regulation of PIN3 expression in an auxin-dependent manner. Involved in responses to gravity stimulation in primary roots by regulating the transcription of PIN3 and PIN7 in gravity-sensing cells, thus modulating auxin asymmetric redistribution. The protein is Transcription factor MYB124 of Arabidopsis thaliana (Mouse-ear cress).